The primary structure comprises 149 residues: Calmodulin (149 aa).

Alanine 2 is subject to N-acetylalanine. EF-hand domains lie at 8–43, 44–79, 81–116, and 117–149; these read EQIAEFKEAFSLFDKDGDGTITTKELGTVMRSLGQN, PTEAELQDMINEVDTDGNGTIDFPEFLTMMARKMKE, DSEEEIREAFRVFDKDGNGFISAAELRHVMTNLGEK, and LTDEEVDEMIREADTDGDGQVNYEEFVGMMTSK. Positions 21, 23, 25, 27, 32, 57, 59, 61, 63, 68, 94, 96, 98, and 105 each coordinate Ca(2+). Lysine 116 carries the post-translational modification N6,N6,N6-trimethyllysine. Residues aspartate 130, aspartate 132, aspartate 134, glutamine 136, and glutamate 141 each coordinate Ca(2+).

This sequence belongs to the calmodulin family.

Its function is as follows. Calmodulin mediates the control of a large number of enzymes, ion channels and other proteins by Ca(2+). Among the enzymes to be stimulated by the calmodulin-Ca(2+) complex are a number of protein kinases and phosphatases. The polypeptide is Calmodulin (Suberites domuncula (Sponge)).